The primary structure comprises 231 residues: Histidine biosynthesis bifunctional protein HisIE (231 aa).

The tract at residues 1–130 (MQDVFRQIDW…QKYPIGVYHI (130 aa)) is phosphoribosyl-AMP cyclohydrolase. A phosphoribosyl-ATP pyrophosphohydrolase region spans residues 131–231 (LDDLYHIIEQ…GIEEKASRKH (101 aa)).

In the N-terminal section; belongs to the PRA-CH family. The protein in the C-terminal section; belongs to the PRA-PH family.

Its subcellular location is the cytoplasm. The catalysed reaction is 1-(5-phospho-beta-D-ribosyl)-ATP + H2O = 1-(5-phospho-beta-D-ribosyl)-5'-AMP + diphosphate + H(+). It carries out the reaction 1-(5-phospho-beta-D-ribosyl)-5'-AMP + H2O = 1-(5-phospho-beta-D-ribosyl)-5-[(5-phospho-beta-D-ribosylamino)methylideneamino]imidazole-4-carboxamide. It participates in amino-acid biosynthesis; L-histidine biosynthesis; L-histidine from 5-phospho-alpha-D-ribose 1-diphosphate: step 2/9. It functions in the pathway amino-acid biosynthesis; L-histidine biosynthesis; L-histidine from 5-phospho-alpha-D-ribose 1-diphosphate: step 3/9. This chain is Histidine biosynthesis bifunctional protein HisIE, found in Helicobacter hepaticus (strain ATCC 51449 / 3B1).